We begin with the raw amino-acid sequence, 307 residues long: 4-hydroxy-tetrahydrodipicolinate synthase (307 aa).

Thr-49 provides a ligand contact to pyruvate. The active-site Proton donor/acceptor is the Tyr-138. Lys-166 acts as the Schiff-base intermediate with substrate in catalysis. Ile-207 is a pyruvate binding site.

This sequence belongs to the DapA family. As to quaternary structure, homotetramer; dimer of dimers.

The protein resides in the cytoplasm. It catalyses the reaction L-aspartate 4-semialdehyde + pyruvate = (2S,4S)-4-hydroxy-2,3,4,5-tetrahydrodipicolinate + H2O + H(+). The protein operates within amino-acid biosynthesis; L-lysine biosynthesis via DAP pathway; (S)-tetrahydrodipicolinate from L-aspartate: step 3/4. In terms of biological role, catalyzes the condensation of (S)-aspartate-beta-semialdehyde [(S)-ASA] and pyruvate to 4-hydroxy-tetrahydrodipicolinate (HTPA). The chain is 4-hydroxy-tetrahydrodipicolinate synthase from Limosilactobacillus reuteri (strain DSM 20016) (Lactobacillus reuteri).